The sequence spans 264 residues: 3-methyl-2-oxobutanoate hydroxymethyltransferase (264 aa).

2 residues coordinate Mg(2+): Asp45 and Asp84. 3-methyl-2-oxobutanoate contacts are provided by residues 45–46 (DS), Asp84, and Lys112. Glu114 contributes to the Mg(2+) binding site. The active-site Proton acceptor is Glu181.

Belongs to the PanB family. In terms of assembly, homodecamer; pentamer of dimers. Requires Mg(2+) as cofactor.

The protein resides in the cytoplasm. The enzyme catalyses 3-methyl-2-oxobutanoate + (6R)-5,10-methylene-5,6,7,8-tetrahydrofolate + H2O = 2-dehydropantoate + (6S)-5,6,7,8-tetrahydrofolate. The protein operates within cofactor biosynthesis; (R)-pantothenate biosynthesis; (R)-pantoate from 3-methyl-2-oxobutanoate: step 1/2. Catalyzes the reversible reaction in which hydroxymethyl group from 5,10-methylenetetrahydrofolate is transferred onto alpha-ketoisovalerate to form ketopantoate. In Vibrio parahaemolyticus serotype O3:K6 (strain RIMD 2210633), this protein is 3-methyl-2-oxobutanoate hydroxymethyltransferase.